The following is a 398-amino-acid chain: 2,3,4,5-tetrahydropyridine-2,6-dicarboxylate N-succinyltransferase (398 aa).

The Acyl-anhydride intermediate role is filled by Glu-268. Succinyl-CoA is bound by residues Arg-270, Gly-285, Ser-288, Ala-311, Asp-326–Gly-327, Gly-334, Lys-361, and Arg-374–Ser-377.

This sequence belongs to the type 2 tetrahydrodipicolinate N-succinyltransferase family. In terms of assembly, homotrimer.

The protein localises to the cytoplasm. It catalyses the reaction (S)-2,3,4,5-tetrahydrodipicolinate + succinyl-CoA + H2O = (S)-2-succinylamino-6-oxoheptanedioate + CoA. It participates in amino-acid biosynthesis; L-lysine biosynthesis via DAP pathway; LL-2,6-diaminopimelate from (S)-tetrahydrodipicolinate (succinylase route): step 1/3. In terms of biological role, catalyzes the conversion of the cyclic tetrahydrodipicolinate (THDP) into the acyclic N-succinyl-L-2-amino-6-oxopimelate using succinyl-CoA. The chain is 2,3,4,5-tetrahydropyridine-2,6-dicarboxylate N-succinyltransferase from Sulfurimonas denitrificans (strain ATCC 33889 / DSM 1251) (Thiomicrospira denitrificans (strain ATCC 33889 / DSM 1251)).